A 239-amino-acid polypeptide reads, in one-letter code: Proteasome subunit beta type-6 (239 aa).

Position 2 is an N-acetylalanine (Ala2). The propeptide at 2 to 34 is removed in mature form; that stretch reads AATLVAARGTRPAPAWGPEAIAPDWENREVSTG. Residue Thr35 is the Nucleophile of the active site. Residue Thr69 is modified to Phosphothreonine.

Belongs to the peptidase T1B family. In terms of assembly, the 26S proteasome consists of a 20S proteasome core and two 19S regulatory subunits. The 20S proteasome core is a barrel-shaped complex made of 28 subunits that are arranged in four stacked rings. The two outer rings are each formed by seven alpha subunits, and the two inner rings are formed by seven beta subunits. The proteolytic activity is exerted by three beta-subunits PSMB5, PSMB6 and PSMB7.

The protein localises to the cytoplasm. It localises to the nucleus. It catalyses the reaction Cleavage of peptide bonds with very broad specificity.. Functionally, component of the 20S core proteasome complex involved in the proteolytic degradation of most intracellular proteins. This complex plays numerous essential roles within the cell by associating with different regulatory particles. Associated with two 19S regulatory particles, forms the 26S proteasome and thus participates in the ATP-dependent degradation of ubiquitinated proteins. The 26S proteasome plays a key role in the maintenance of protein homeostasis by removing misfolded or damaged proteins that could impair cellular functions, and by removing proteins whose functions are no longer required. Associated with the PA200 or PA28, the 20S proteasome mediates ubiquitin-independent protein degradation. This type of proteolysis is required in several pathways including spermatogenesis (20S-PA200 complex) or generation of a subset of MHC class I-presented antigenic peptides (20S-PA28 complex). Within the 20S core complex, PSMB6 displays a peptidylglutamyl-hydrolyzing activity also termed postacidic or caspase-like activity, meaning that the peptides bond hydrolysis occurs directly after acidic residues. The protein is Proteasome subunit beta type-6 (PSMB6) of Bos taurus (Bovine).